The chain runs to 110 residues: Period circadian protein (110 aa).

The interval 23-97 is disordered; sequence VTNTSIAGTG…GGAGGGGGVT (75 aa). 12 consecutive repeat copies span residues 30–31, 33–34, 36–37, 38–39, 40–41, 42–43, 44–45, 46–47, 48–49, 50–51, 52–53, and 54–55. Over residues 30–63 the composition is skewed to gly residues; the sequence is GTGGTGGTGTGTGTGTGTGTGTGTGTDTGTGTGT. The interval 30–79 is 24 X 2 AA approximate tandem repeats of G-T; it reads GTGGTGGTGTGTGTGTGTGTGTGTGTDTGTGTGTRNGTNSGTNSGTRTGT. Residues 56–57 form a 13; approximate repeat; it reads DT. 3 repeat units span residues 58-59, 60-61, and 62-63. One copy of the 17; approximate repeat lies at 64 to 65; the sequence is RN. Low complexity predominate over residues 64 to 83; it reads RNGTNSGTNSGTRTGTASSY. Repeat unit 18 spans residues 66-67; it reads GT. The 19; approximate repeat unit spans residues 68-69; that stretch reads NS. Copy 20 of the repeat occupies 70 to 71; it reads GT. A 21; approximate repeat occupies 72-73; it reads NS. Repeat unit 22 spans residues 74-75; that stretch reads GT. One copy of the 23; approximate repeat lies at 76 to 77; it reads RT. Repeat 24 spans residues 78–79; that stretch reads GT. Residues 84–96 are compositionally biased toward gly residues; that stretch reads RGGGGGAGGGGGV.

As to quaternary structure, forms a heterodimer with timeless (TIM); the complex then translocates into the nucleus. Post-translationally, phosphorylated with a circadian rhythmicity, probably by the double-time protein (dbt). Phosphorylation could be implicated in the stability of per monomer and in the formation of heterodimer per-tim.

It localises to the nucleus. The protein resides in the cytoplasm. Its subcellular location is the perinuclear region. In terms of biological role, essential for biological clock functions. Determines the period length of circadian and ultradian rhythms; an increase in PER dosage leads to shortened circadian rhythms and a decrease leads to lengthened circadian rhythms. Essential for the circadian rhythmicity of locomotor activity, eclosion behavior, and for the rhythmic component of the male courtship song that originates in the thoracic nervous system. The biological cycle depends on the rhythmic formation and nuclear localization of the TIM-PER complex. Light induces the degradation of TIM, which promotes elimination of PER. Nuclear activity of the heterodimer coordinatively regulates PER and TIM transcription through a negative feedback loop. Behaves as a negative element in circadian transcriptional loop. Does not appear to bind DNA, suggesting indirect transcriptional inhibition. The protein is Period circadian protein (per) of Drosophila erecta (Fruit fly).